We begin with the raw amino-acid sequence, 105 residues long: Small ribosomal subunit protein uS10 (105 aa).

This sequence belongs to the universal ribosomal protein uS10 family. As to quaternary structure, part of the 30S ribosomal subunit.

Functionally, involved in the binding of tRNA to the ribosomes. The polypeptide is Small ribosomal subunit protein uS10 (Synechococcus elongatus (strain ATCC 33912 / PCC 7942 / FACHB-805) (Anacystis nidulans R2)).